Here is a 342-residue protein sequence, read N- to C-terminus: MNKDLLLSSYDYTLANELIANYPTNPKEDARLLVFDRKNKEIFHTTFKNLQDFLPNCAIFFNDTKVIKARIYGNKVSGGKIELFLHQPFLNSHNPLFLAQIKGRVKKDEILYFKKDLKIRVVELLNDGLRKVQFFQNDKTLDTSNLYNLLDKIGHIPLPPYIKREDEKSDLKDYQSIFAKNLGAVAAPTASLHFSETMLENLRKKHEIYHLTLHVGAGTFKSVECENIQEHKMHSEFFNIPQQACEIIDSKQAILGVGTTVTRTIEYYARTKTKSGFCDLFLHPQNPPIRQNHLLTNFHLPKSTLIMLVSAFIGREQCLKLYELAIKEKYRFYSYGDAMLIL.

The protein belongs to the QueA family. In terms of assembly, monomer.

It is found in the cytoplasm. The enzyme catalyses 7-aminomethyl-7-carbaguanosine(34) in tRNA + S-adenosyl-L-methionine = epoxyqueuosine(34) in tRNA + adenine + L-methionine + 2 H(+). Its pathway is tRNA modification; tRNA-queuosine biosynthesis. Functionally, transfers and isomerizes the ribose moiety from AdoMet to the 7-aminomethyl group of 7-deazaguanine (preQ1-tRNA) to give epoxyqueuosine (oQ-tRNA). The polypeptide is S-adenosylmethionine:tRNA ribosyltransferase-isomerase (Campylobacter jejuni subsp. jejuni serotype O:6 (strain 81116 / NCTC 11828)).